We begin with the raw amino-acid sequence, 575 residues long: Major outer membrane protein MspA (575 aa).

Residues 1–19 (MKKALVFFVALAMIGSVFA) form the signal peptide.

The protein resides in the cell outer membrane. Its function is as follows. Major component of the outer membrane sheath. The protein is Major outer membrane protein MspA (mspA) of Treponema maltophilum.